The sequence spans 444 residues: CCA-adding enzyme (444 aa).

S57 and R60 together coordinate ATP. Positions 57 and 60 each coordinate CTP. Residues D69, D71, and D124 each contribute to the Mg(2+) site. 3 residues coordinate ATP: H147, K168, and Y177. Positions 147, 168, and 177 each coordinate CTP.

It belongs to the tRNA nucleotidyltransferase/poly(A) polymerase family. Archaeal CCA-adding enzyme subfamily. Homodimer. Mg(2+) is required as a cofactor.

The catalysed reaction is a tRNA precursor + 2 CTP + ATP = a tRNA with a 3' CCA end + 3 diphosphate. The enzyme catalyses a tRNA with a 3' CCA end + 2 CTP + ATP = a tRNA with a 3' CCACCA end + 3 diphosphate. Functionally, catalyzes the addition and repair of the essential 3'-terminal CCA sequence in tRNAs without using a nucleic acid template. Adds these three nucleotides in the order of C, C, and A to the tRNA nucleotide-73, using CTP and ATP as substrates and producing inorganic pyrophosphate. tRNA 3'-terminal CCA addition is required both for tRNA processing and repair. Also involved in tRNA surveillance by mediating tandem CCA addition to generate a CCACCA at the 3' terminus of unstable tRNAs. While stable tRNAs receive only 3'-terminal CCA, unstable tRNAs are marked with CCACCA and rapidly degraded. The chain is CCA-adding enzyme from Methanococcus maripaludis (strain C7 / ATCC BAA-1331).